A 130-amino-acid polypeptide reads, in one-letter code: Small ribosomal subunit protein uS8 (130 aa).

This sequence belongs to the universal ribosomal protein uS8 family. In terms of assembly, part of the 30S ribosomal subunit. Contacts proteins S5 and S12.

In terms of biological role, one of the primary rRNA binding proteins, it binds directly to 16S rRNA central domain where it helps coordinate assembly of the platform of the 30S subunit. The sequence is that of Small ribosomal subunit protein uS8 from Pasteurella multocida (strain Pm70).